The following is a 122-amino-acid chain: Large ribosomal subunit protein uL14 (122 aa).

The protein belongs to the universal ribosomal protein uL14 family. In terms of assembly, part of the 50S ribosomal subunit. Forms a cluster with proteins L3 and L19. In the 70S ribosome, L14 and L19 interact and together make contacts with the 16S rRNA in bridges B5 and B8.

Binds to 23S rRNA. Forms part of two intersubunit bridges in the 70S ribosome. The sequence is that of Large ribosomal subunit protein uL14 from Baumannia cicadellinicola subsp. Homalodisca coagulata.